The primary structure comprises 414 residues: NAC domain-containing protein 35 (414 aa).

Polar residues predominate over residues 1 to 21 (MAIVSSTTSIIPMSNQVNNNE). A disordered region spans residues 1-47 (MAIVSSTTSIIPMSNQVNNNEKGIEDNDHRGGQESHVQNEDEADDHD). Over residues 22-47 (KGIEDNDHRGGQESHVQNEDEADDHD) the composition is skewed to basic and acidic residues. Residues 51–198 (VMPGFRFHPT…EISLCRVYKR (148 aa)) form the NAC domain. A DNA-binding region spans residues 149-204 (IGLKKTLVFYSGKAPKGTRTSWIMNEYRLPHHETEKYQKAEISLCRVYKRPGVEDH). The segment at 200–251 (GVEDHPSVPRSLSTRHHNHNSSTSSRLALRQQQHHSSSSNHSDNNLNNNNNI) is disordered. The segment covering 233–251 (HHSSSSNHSDNNLNNNNNI) has biased composition (low complexity).

In terms of tissue distribution, expressed in aerial organs in early stages of seedling development.

It localises to the nucleus. Functionally, transcription factor that acts as a floral repressor. Controls flowering time by negatively regulating CONSTANS (CO) expression in a GIGANTEA (GI)-independent manner. Regulates the plant cold response by positive regulation of the cold response genes COR15A and KIN1. May coordinate cold response and flowering time. The protein is NAC domain-containing protein 35 of Arabidopsis thaliana (Mouse-ear cress).